A 183-amino-acid polypeptide reads, in one-letter code: NADH-quinone oxidoreductase subunit A (183 aa).

Helical transmembrane passes span 11–31, 63–83, and 98–118; these read IIAF…VPLL, FYLV…LYAW, and MVIF…TGAL. The segment at 160 to 183 is disordered; that stretch reads GHIPAQSSGRMKSKTSTAPSSKQE. The segment covering 164-183 has biased composition (polar residues); the sequence is AQSSGRMKSKTSTAPSSKQE.

This sequence belongs to the complex I subunit 3 family. NDH-1 is composed of 14 different subunits. Subunits NuoA, H, J, K, L, M, N constitute the membrane sector of the complex.

Its subcellular location is the cell inner membrane. The catalysed reaction is a quinone + NADH + 5 H(+)(in) = a quinol + NAD(+) + 4 H(+)(out). In terms of biological role, NDH-1 shuttles electrons from NADH, via FMN and iron-sulfur (Fe-S) centers, to quinones in the respiratory chain. The immediate electron acceptor for the enzyme in this species is believed to be ubiquinone. Couples the redox reaction to proton translocation (for every two electrons transferred, four hydrogen ions are translocated across the cytoplasmic membrane), and thus conserves the redox energy in a proton gradient. This chain is NADH-quinone oxidoreductase subunit A, found in Acinetobacter baylyi (strain ATCC 33305 / BD413 / ADP1).